A 182-amino-acid polypeptide reads, in one-letter code: CASP-like protein 2B1 (182 aa).

The Cytoplasmic portion of the chain corresponds to 1–12 (MKLIDRRMRLTE). The helical transmembrane segment at 13-31 (LLLRCSISVFALLALILVV) threads the bilayer. The Extracellular segment spans residues 32–52 (TDTEVKLIFTIKKTAKYTDMK). The chain crosses the membrane as a helical span at residues 53-73 (AVVFLVVANGIAAVYSLLQSV). Topologically, residues 74-89 (RCVVGTMKGRVLFSKP) are cytoplasmic. Residues 90-110 (LAWAFFSGDQAMAYLNVAAIA) traverse the membrane as a helical segment. Topologically, residues 111–141 (ATAESGVIAREGEEDLQWMRVCNMYGKFCNQ) are extracellular. Residues 142–162 (MAIGVSSALLASIAMVFVSCI) form a helical membrane-spanning segment. The Cytoplasmic segment spans residues 163–182 (SAFSLFRLYGATRDRRTTPW).

It belongs to the Casparian strip membrane proteins (CASP) family. Homodimer and heterodimers.

The protein localises to the cell membrane. The sequence is that of CASP-like protein 2B1 from Arabidopsis lyrata subsp. lyrata (Lyre-leaved rock-cress).